Here is a 139-residue protein sequence, read N- to C-terminus: S-adenosyl-L-methionine-binding protein AF_0241 (139 aa).

The region spanning 3–133 (LKPIGVVKSP…YSPEIDCVNQ (131 aa)) is the TsaA-like domain. S-adenosyl-L-methionine is bound by residues Gln16, 20-22 (PRQ), 58-59 (DK), Arg82, Leu92, and 113-116 (LDGS).

The protein belongs to the tRNA methyltransferase O family. As to quaternary structure, homodimer.

In Archaeoglobus fulgidus (strain ATCC 49558 / DSM 4304 / JCM 9628 / NBRC 100126 / VC-16), this protein is S-adenosyl-L-methionine-binding protein AF_0241.